The primary structure comprises 1792 residues: Non-reducing polyketide synthase aptA (1792 aa).

Positions 1–395 (MKDNTHSTTL…PRSFAHSKLA (395 aa)) are N-terminal acylcarrier protein transacylase domain (SAT). Positions 391-824 (HSKLAVVGMA…GGNTTVLLED (434 aa)) constitute a Ketosynthase family 3 (KS3) domain. Active-site for beta-ketoacyl synthase activity residues include cysteine 564, histidine 699, and histidine 742. The malonyl-CoA:ACP transacylase (MAT) domain stretch occupies residues 926-1243 (VFAFTGQGAF…NLVALHLAGC (318 aa)). The interval 1308 to 1625 (TSLIHEIIEE…PRLLMDRFFS (318 aa)) is product template (PT) domain. The tract at residues 1312 to 1447 (HEIIEETIGE…GSVRFEADAE (136 aa)) is N-terminal hotdog fold. Residues 1312–1621 (HEIIEETIGE…FRRVPRLLMD (310 aa)) enclose the PKS/mFAS DH domain. Histidine 1344 (proton acceptor; for dehydratase activity) is an active-site residue. A C-terminal hotdog fold region spans residues 1475 to 1621 (QASQLSKALS…FRRVPRLLMD (147 aa)). Aspartate 1533 acts as the Proton donor; for dehydratase activity in catalysis. The span at 1634–1649 (VAASASSAPKTATKHA) shows a compositional bias: low complexity. Residues 1634 to 1716 (VAASASSAPK…GPNGTTSQPE (83 aa)) are disordered. The segment covering 1664–1684 (TPSSLPTVQAQNTSPPQQVTP) has biased composition (polar residues). The segment covering 1694–1705 (TPEEEKPGKADA) has biased composition (basic and acidic residues). In terms of domain architecture, Carrier spans 1715–1792 (PEATGVVGQC…DMMDWLEQYC (78 aa)). Serine 1752 is modified (O-(pantetheine 4'-phosphoryl)serine).

The cofactor is pantetheine 4'-phosphate.

It carries out the reaction holo-[ACP] + 8 malonyl-CoA + acetyl-CoA + 8 H(+) = 3,6,8,9-tetrahydroxy-1-oxo-3-(2-oxopropyl)-1,2,3,4-tetrahydroanthracene-2-carboxyl-[ACP] + 8 CO2 + 9 CoA + 2 H2O. It functions in the pathway secondary metabolite biosynthesis. Its function is as follows. Non-reducing polyketide synthase (NRPKS); part of the gene cluster that mediates the biosynthesis of asperthecin, an anthraquinone pigment. Catalyzes the formation of the aromatic polyketide from acetyl coenzyme A and seven malonyl coenzyme A molecules. Through its product template (PT) domain, catalyzes the cyclization of the polyketide backbone via C6-C11 aldolcondensation. Polyketide is subsequently hydrolyzed from the NRPKS by the action of the hydrolase aptB into endocrocin-9-anthrone. Endocrocin-9-anthrone is then oxidized into endocrocin by aptC. Endocrocin is likely to decarboxylate spontaneously to form emodin which explains why there is no decarboxylase in the asperthecin biosynthesis cluster. Finally, aptC or another endogenous oxygenase catalyzes additional oxidation steps to form asperthecin. The sequence is that of Non-reducing polyketide synthase aptA from Emericella nidulans (strain FGSC A4 / ATCC 38163 / CBS 112.46 / NRRL 194 / M139) (Aspergillus nidulans).